We begin with the raw amino-acid sequence, 191 residues long: 3-isopropylmalate dehydratase small subunit (191 aa).

It belongs to the LeuD family. LeuD type 1 subfamily. In terms of assembly, heterodimer of LeuC and LeuD.

The enzyme catalyses (2R,3S)-3-isopropylmalate = (2S)-2-isopropylmalate. Its pathway is amino-acid biosynthesis; L-leucine biosynthesis; L-leucine from 3-methyl-2-oxobutanoate: step 2/4. Functionally, catalyzes the isomerization between 2-isopropylmalate and 3-isopropylmalate, via the formation of 2-isopropylmaleate. The sequence is that of 3-isopropylmalate dehydratase small subunit from Anaeromyxobacter dehalogenans (strain 2CP-C).